A 414-amino-acid polypeptide reads, in one-letter code: Serine hydroxymethyltransferase (414 aa).

(6S)-5,6,7,8-tetrahydrofolate-binding positions include leucine 117 and 121–123; that span reads GHL. The residue at position 226 (lysine 226) is an N6-(pyridoxal phosphate)lysine. 349–351 serves as a coordination point for (6S)-5,6,7,8-tetrahydrofolate; sequence SPF.

It belongs to the SHMT family. In terms of assembly, homodimer. Pyridoxal 5'-phosphate is required as a cofactor.

It is found in the cytoplasm. The catalysed reaction is (6R)-5,10-methylene-5,6,7,8-tetrahydrofolate + glycine + H2O = (6S)-5,6,7,8-tetrahydrofolate + L-serine. It functions in the pathway one-carbon metabolism; tetrahydrofolate interconversion. It participates in amino-acid biosynthesis; glycine biosynthesis; glycine from L-serine: step 1/1. Its function is as follows. Catalyzes the reversible interconversion of serine and glycine with tetrahydrofolate (THF) serving as the one-carbon carrier. This reaction serves as the major source of one-carbon groups required for the biosynthesis of purines, thymidylate, methionine, and other important biomolecules. Also exhibits THF-independent aldolase activity toward beta-hydroxyamino acids, producing glycine and aldehydes, via a retro-aldol mechanism. The polypeptide is Serine hydroxymethyltransferase (Desulfovibrio desulfuricans (strain ATCC 27774 / DSM 6949 / MB)).